Consider the following 279-residue polypeptide: Pleckstrin homology domain-containing family F member 1 (279 aa).

One can recognise a PH domain in the interval 35 to 131; sequence VLLGEGVLTK…WISHIEECVR (97 aa). The segment at 152-212 adopts an FYVE-type zinc-finger fold; sequence DKATDICMRC…VCSLCYRELA (61 aa). Residues C158, C161, C175, C178, C183, C186, C204, and C207 each coordinate Zn(2+). Positions 218–264 are disordered; it reads EEAEEQGAGSPGQPAHLARPICGASSGDDDDSDEDKEGSRDGDWPSS. Residues 244-253 are compositionally biased toward acidic residues; sequence GDDDDSDEDK.

Highly expressed in heart and skeletal muscle. Weakly expressed in brain, thymus, spleen, kidney, liver, small intestine, placenta and lung.

The protein resides in the nucleus. It localises to the cytoplasm. It is found in the perinuclear region. The protein localises to the lysosome. In terms of biological role, may induce apoptosis through the lysosomal-mitochondrial pathway. Translocates to the lysosome initiating the permeabilization of lysosomal membrane (LMP) and resulting in the release of CTSD and CTSL to the cytoplasm. Triggers the caspase-independent apoptosis by altering mitochondrial membrane permeabilization (MMP) resulting in the release of PDCD8. This Homo sapiens (Human) protein is Pleckstrin homology domain-containing family F member 1 (PLEKHF1).